The primary structure comprises 197 residues: Ribosome maturation factor RimP (197 aa).

The protein belongs to the RimP family.

The protein localises to the cytoplasm. Functionally, required for maturation of 30S ribosomal subunits. The chain is Ribosome maturation factor RimP from Acidovorax ebreus (strain TPSY) (Diaphorobacter sp. (strain TPSY)).